A 180-amino-acid chain; its full sequence is MPKFLDALAGFAVTLGSMFKKPITEGYPEKPGPVAPRYHGRHQLNRYPDGLEKCIGCELCAWACPADAIYVEGADNTADERYSPGERYGRVYQINYLRCIGCGLCIEACPTRALTMTTEYEMADDNRADLIWGKDKLLAPLQEGMQAPPHDMAPGKTDDDYYLGNVTPITPVPSGTEDAR.

2 4Fe-4S ferredoxin-type domains span residues 44–74 and 90–119; these read LNRYPDGLEKCIGCELCAWACPADAIYVEGA and RVYQINYLRCIGCGLCIEACPTRALTMTTE. Cys-54, Cys-57, Cys-60, Cys-64, Cys-99, Cys-102, Cys-105, and Cys-109 together coordinate [4Fe-4S] cluster. The segment at 145-180 is disordered; sequence MQAPPHDMAPGKTDDDYYLGNVTPITPVPSGTEDAR.

It belongs to the complex I 23 kDa subunit family. NDH-1 is composed of 14 different subunits. Subunits NuoA, H, J, K, L, M, N constitute the membrane sector of the complex. Requires [4Fe-4S] cluster as cofactor.

The protein localises to the cell membrane. The catalysed reaction is a quinone + NADH + 5 H(+)(in) = a quinol + NAD(+) + 4 H(+)(out). Its function is as follows. NDH-1 shuttles electrons from NADH, via FMN and iron-sulfur (Fe-S) centers, to quinones in the respiratory chain. The immediate electron acceptor for the enzyme in this species is believed to be menaquinone. Couples the redox reaction to proton translocation (for every two electrons transferred, four hydrogen ions are translocated across the cytoplasmic membrane), and thus conserves the redox energy in a proton gradient. This Mycolicibacterium smegmatis (strain ATCC 700084 / mc(2)155) (Mycobacterium smegmatis) protein is NADH-quinone oxidoreductase subunit I.